We begin with the raw amino-acid sequence, 113 residues long: T cell receptor alpha variable 8-4 (113 aa).

The N-terminal stretch at 1-20 is a signal peptide; the sequence is MLLLLVPVLEVIFTLGGTRA. An Ig-like domain is found at 21 to 113; the sequence is QSVTQLGSHV…DAAEYFCAVS (93 aa). The cysteines at positions 42 and 110 are disulfide-linked. A glycan (N-linked (GlcNAc...) asparagine) is linked at N43.

In terms of assembly, alpha-beta TR is a heterodimer composed of an alpha and beta chain; disulfide-linked. The alpha-beta TR is associated with the transmembrane signaling CD3 coreceptor proteins to form the TR-CD3 (TcR or TCR). The assembly of alpha-beta TR heterodimers with CD3 occurs in the endoplasmic reticulum where a single alpha-beta TR heterodimer associates with one CD3D-CD3E heterodimer, one CD3G-CD3E heterodimer and one CD247 homodimer forming a stable octameric structure. CD3D-CD3E and CD3G-CD3E heterodimers preferentially associate with TR alpha and TR beta chains, respectively. The association of the CD247 homodimer is the last step of TcR assembly in the endoplasmic reticulum and is required for transport to the cell surface.

The protein resides in the cell membrane. Its function is as follows. V region of the variable domain of T cell receptor (TR) alpha chain that participates in the antigen recognition. Alpha-beta T cell receptors are antigen specific receptors which are essential to the immune response and are present on the cell surface of T lymphocytes. Recognize peptide-major histocompatibility (MH) (pMH) complexes that are displayed by antigen presenting cells (APC), a prerequisite for efficient T cell adaptive immunity against pathogens. Binding of alpha-beta TR to pMH complex initiates TR-CD3 clustering on the cell surface and intracellular activation of LCK that phosphorylates the ITAM motifs of CD3G, CD3D, CD3E and CD247 enabling the recruitment of ZAP70. In turn ZAP70 phosphorylates LAT, which recruits numerous signaling molecules to form the LAT signalosome. The LAT signalosome propagates signal branching to three major signaling pathways, the calcium, the mitogen-activated protein kinase (MAPK) kinase and the nuclear factor-kappa-B (NF-kB) pathways, leading to the mobilization of transcription factors that are critical for gene expression and essential for T cell growth and differentiation. The T cell repertoire is generated in the thymus, by V-(D)-J rearrangement. This repertoire is then shaped by intrathymic selection events to generate a peripheral T cell pool of self-MH restricted, non-autoaggressive T cells. Post-thymic interaction of alpha-beta TR with the pMH complexes shapes TR structural and functional avidity. This Homo sapiens (Human) protein is T cell receptor alpha variable 8-4.